The sequence spans 336 residues: tRNA N6-adenosine threonylcarbamoyltransferase (336 aa).

Positions 114 and 118 each coordinate Fe cation. Substrate-binding positions include 136–140 (LVSGG), D169, G182, D186, and N275. D301 provides a ligand contact to Fe cation.

It belongs to the KAE1 / TsaD family. It depends on Fe(2+) as a cofactor.

It is found in the cytoplasm. It carries out the reaction L-threonylcarbamoyladenylate + adenosine(37) in tRNA = N(6)-L-threonylcarbamoyladenosine(37) in tRNA + AMP + H(+). In terms of biological role, required for the formation of a threonylcarbamoyl group on adenosine at position 37 (t(6)A37) in tRNAs that read codons beginning with adenine. Is involved in the transfer of the threonylcarbamoyl moiety of threonylcarbamoyl-AMP (TC-AMP) to the N6 group of A37, together with TsaE and TsaB. TsaD likely plays a direct catalytic role in this reaction. This Streptococcus pneumoniae (strain Taiwan19F-14) protein is tRNA N6-adenosine threonylcarbamoyltransferase.